The primary structure comprises 440 residues: uncharacterized protein (440 aa).

The N-terminal stretch at 1-19 (MKKLLLAASIIYFASVSLA) is a signal peptide.

This is an uncharacterized protein from Rickettsia typhi (strain ATCC VR-144 / Wilmington).